The chain runs to 76 residues: Acyl carrier protein (76 aa).

The 76-residue stretch at 1–76 folds into the Carrier domain; the sequence is MALLDDVKAV…DAIKYIENNA (76 aa). Serine 36 carries the post-translational modification O-(pantetheine 4'-phosphoryl)serine.

Belongs to the acyl carrier protein (ACP) family. In terms of processing, 4'-phosphopantetheine is transferred from CoA to a specific serine of apo-ACP by AcpS. This modification is essential for activity because fatty acids are bound in thioester linkage to the sulfhydryl of the prosthetic group.

It localises to the cytoplasm. Its pathway is lipid metabolism; fatty acid biosynthesis. Functionally, carrier of the growing fatty acid chain in fatty acid biosynthesis. This is Acyl carrier protein from Aliarcobacter butzleri (strain RM4018) (Arcobacter butzleri).